Reading from the N-terminus, the 518-residue chain is 3-octaprenyl-4-hydroxybenzoate carboxy-lyase (518 aa).

Asn177 contacts Mn(2+). Residues Ile180–Arg182, Arg194–Leu196, and Arg199–Gly200 each bind prenylated FMN. Residue Glu243 coordinates Mn(2+). Asp318 serves as the catalytic Proton donor.

It belongs to the UbiD family. Homohexamer. Prenylated FMN serves as cofactor. The cofactor is Mn(2+).

It localises to the cell membrane. It carries out the reaction a 4-hydroxy-3-(all-trans-polyprenyl)benzoate + H(+) = a 2-(all-trans-polyprenyl)phenol + CO2. The protein operates within cofactor biosynthesis; ubiquinone biosynthesis. Its function is as follows. Catalyzes the decarboxylation of 3-octaprenyl-4-hydroxy benzoate to 2-octaprenylphenol, an intermediate step in ubiquinone biosynthesis. This Burkholderia lata (strain ATCC 17760 / DSM 23089 / LMG 22485 / NCIMB 9086 / R18194 / 383) protein is 3-octaprenyl-4-hydroxybenzoate carboxy-lyase.